The chain runs to 63 residues: Large ribosomal subunit protein uL29 (63 aa).

Belongs to the universal ribosomal protein uL29 family.

This is Large ribosomal subunit protein uL29 from Marinomonas sp. (strain MWYL1).